A 312-amino-acid polypeptide reads, in one-letter code: MEPGNYTVVTEFILLGLTDDITVSVILFVMFLIVYSVTLMGNLNIIVLIRTSPQLHTPMYLFLSHLAFLDIGYSSSVTPIMLRGFLRKGTFIPVAGCVAQLCIVVAFGTSESFLLASMAYDRYVAICSPLLYSTQMSSTVCILLVGTSYLGGWVNAWIFTGCSLNLSFCGPNKINHFFCDYSPLLKLSCSHDFSFEVIPAISSGSIIVVTVFIIALSYVYILVSILKMRSTEGRQKAFSTCTSHLTAVTLFFGTITFIYVMPQSSYSTDQNKVVSVFYTVVIPMLNPLIYSFRNKEVKEAMKKLIAKTHWWS.

The Extracellular segment spans residues 1–25 (MEPGNYTVVTEFILLGLTDDITVSV). The N-linked (GlcNAc...) asparagine glycan is linked to N5. Residues 26-46 (ILFVMFLIVYSVTLMGNLNII) form a helical membrane-spanning segment. Residues 47–54 (VLIRTSPQ) are Cytoplasmic-facing. A helical transmembrane segment spans residues 55–75 (LHTPMYLFLSHLAFLDIGYSS). Topologically, residues 76-99 (SVTPIMLRGFLRKGTFIPVAGCVA) are extracellular. A disulfide bond links C97 and C189. A helical membrane pass occupies residues 100 to 120 (QLCIVVAFGTSESFLLASMAY). The Cytoplasmic segment spans residues 121–133 (DRYVAICSPLLYS). A helical transmembrane segment spans residues 134-154 (TQMSSTVCILLVGTSYLGGWV). At 155 to 196 (NAWIFTGCSLNLSFCGPNKINHFFCDYSPLLKLSCSHDFSFE) the chain is on the extracellular side. N-linked (GlcNAc...) asparagine glycosylation is present at N165. The chain crosses the membrane as a helical span at residues 197-217 (VIPAISSGSIIVVTVFIIALS). Residues 218–237 (YVYILVSILKMRSTEGRQKA) are Cytoplasmic-facing. Residues 238–258 (FSTCTSHLTAVTLFFGTITFI) traverse the membrane as a helical segment. At 259 to 271 (YVMPQSSYSTDQN) the chain is on the extracellular side. Residues 272–292 (KVVSVFYTVVIPMLNPLIYSF) form a helical membrane-spanning segment. At 293–312 (RNKEVKEAMKKLIAKTHWWS) the chain is on the cytoplasmic side.

Belongs to the G-protein coupled receptor 1 family.

It is found in the cell membrane. Functionally, probable odorant receptor, which recognizes only aliphatic alcohols, suggesting that it may convey a 'woody' or 'sweet' sour. The polypeptide is Olfactory receptor 5p57 (Mus musculus (Mouse)).